Here is a 332-residue protein sequence, read N- to C-terminus: Glycerol-3-phosphate dehydrogenase [NAD(P)+] (332 aa).

4 residues coordinate NADPH: Ser11, Phe12, Lys32, and Lys106. Residues Lys106, Gly137, and Ser139 each contribute to the sn-glycerol 3-phosphate site. An NADPH-binding site is contributed by Ala141. Sn-glycerol 3-phosphate-binding residues include Lys192, Asp245, Ser255, Arg256, and Asn257. Lys192 (proton acceptor) is an active-site residue. Arg256 contacts NADPH. Residues Val280 and Glu282 each coordinate NADPH.

This sequence belongs to the NAD-dependent glycerol-3-phosphate dehydrogenase family.

Its subcellular location is the cytoplasm. The enzyme catalyses sn-glycerol 3-phosphate + NAD(+) = dihydroxyacetone phosphate + NADH + H(+). It carries out the reaction sn-glycerol 3-phosphate + NADP(+) = dihydroxyacetone phosphate + NADPH + H(+). Its pathway is membrane lipid metabolism; glycerophospholipid metabolism. Functionally, catalyzes the reduction of the glycolytic intermediate dihydroxyacetone phosphate (DHAP) to sn-glycerol 3-phosphate (G3P), the key precursor for phospholipid synthesis. This is Glycerol-3-phosphate dehydrogenase [NAD(P)+] from Staphylococcus aureus (strain Mu3 / ATCC 700698).